Here is a 190-residue protein sequence, read N- to C-terminus: TATA box-binding protein-like 1 (190 aa).

The protein belongs to the TBP family. Binds TFIIA and TFIIB.

Its subcellular location is the cytoplasm. It localises to the nucleus. In terms of biological role, part of a specialized transcription system that mediates the transcription of most ribosomal proteins through the 5'-TCT-3' motif which is a core promoter element at these genes. Seems to also mediate the transcription of NF1. Does not bind the TATA box. The polypeptide is TATA box-binding protein-like 1 (TBPL1) (Pongo abelii (Sumatran orangutan)).